The following is a 258-amino-acid chain: Thiazole synthase (258 aa).

Residue lysine 97 is the Schiff-base intermediate with DXP of the active site. Residues glycine 158, 184–185 (AG), and 206–207 (NT) contribute to the 1-deoxy-D-xylulose 5-phosphate site.

It belongs to the ThiG family. As to quaternary structure, homotetramer. Forms heterodimers with either ThiH or ThiS.

It localises to the cytoplasm. It carries out the reaction [ThiS sulfur-carrier protein]-C-terminal-Gly-aminoethanethioate + 2-iminoacetate + 1-deoxy-D-xylulose 5-phosphate = [ThiS sulfur-carrier protein]-C-terminal Gly-Gly + 2-[(2R,5Z)-2-carboxy-4-methylthiazol-5(2H)-ylidene]ethyl phosphate + 2 H2O + H(+). Its pathway is cofactor biosynthesis; thiamine diphosphate biosynthesis. Functionally, catalyzes the rearrangement of 1-deoxy-D-xylulose 5-phosphate (DXP) to produce the thiazole phosphate moiety of thiamine. Sulfur is provided by the thiocarboxylate moiety of the carrier protein ThiS. In vitro, sulfur can be provided by H(2)S. The sequence is that of Thiazole synthase from Bacteroides fragilis (strain ATCC 25285 / DSM 2151 / CCUG 4856 / JCM 11019 / LMG 10263 / NCTC 9343 / Onslow / VPI 2553 / EN-2).